Consider the following 114-residue polypeptide: Ribosome-binding factor A (114 aa).

This sequence belongs to the RbfA family. As to quaternary structure, monomer. Binds 30S ribosomal subunits, but not 50S ribosomal subunits or 70S ribosomes.

It localises to the cytoplasm. Functionally, one of several proteins that assist in the late maturation steps of the functional core of the 30S ribosomal subunit. Associates with free 30S ribosomal subunits (but not with 30S subunits that are part of 70S ribosomes or polysomes). Required for efficient processing of 16S rRNA. May interact with the 5'-terminal helix region of 16S rRNA. This chain is Ribosome-binding factor A, found in Phytoplasma mali (strain AT).